Here is a 263-residue protein sequence, read N- to C-terminus: MAEITAQLVKQLRDKTGAGMMDCKKALQETGGEMEKAIDWLRQKGLASAGKKAGRLTAEGLVDSYIHTGGRIGVLVEVNCETDFVARNEAFRSLVQDIAKQIAACPNVEYVSIDEIPPATVEREKAIAMGSDALKGKPENVKEKIVQGKMDKTLRELCLLDQPFIRDQSITVEELIKQAIAQLGENVKVRRFVRFVMGEGIEKEEANLAEEVAAQIAAKEAPPAVVEAPVAETPEPAVAETPEAKPAATESKPAKSKSAKKKK.

The tract at residues 82–85 (TDFV) is involved in Mg(2+) ion dislocation from EF-Tu. Positions 221 to 251 (APPAVVEAPVAETPEPAVAETPEAKPAATES) are enriched in low complexity. A disordered region spans residues 221–263 (APPAVVEAPVAETPEPAVAETPEAKPAATESKPAKSKSAKKKK). The span at 254–263 (AKSKSAKKKK) shows a compositional bias: basic residues.

It belongs to the EF-Ts family.

The protein resides in the cytoplasm. Functionally, associates with the EF-Tu.GDP complex and induces the exchange of GDP to GTP. It remains bound to the aminoacyl-tRNA.EF-Tu.GTP complex up to the GTP hydrolysis stage on the ribosome. This is Elongation factor Ts from Cyanothece sp. (strain PCC 7425 / ATCC 29141).